Reading from the N-terminus, the 401-residue chain is Mu-type opioid receptor (401 aa).

Topologically, residues 1–69 (MDSSADPRNA…CPPTGSPSMV (69 aa)) are extracellular. Residues N9, N12, N34, N41, and N49 are each glycosylated (N-linked (GlcNAc...) asparagine). Residues 70-94 (TAITIMALYSIVCVVGLFGNFLVMY) traverse the membrane as a helical segment. Topologically, residues 95-107 (VIVRYTKMKTATN) are cytoplasmic. The helical transmembrane segment at 108–132 (IYIFNLALADALATSTLPFQSVNYL) threads the bilayer. At 133–143 (MGTWPFGTILC) the chain is on the extracellular side. An intrachain disulfide couples C143 to C220. A helical membrane pass occupies residues 144-166 (KIVISIDYYNMFTSIFTLCTMSV). Residues 167–186 (DRYIAVCHPVKALDFRTPRN) lie on the Cytoplasmic side of the membrane. Y169 carries the post-translational modification Phosphotyrosine. A helical transmembrane segment spans residues 187–208 (AKIINVCNWILSSAIGLPVMFM). The Extracellular segment spans residues 209-231 (ATTKYRNGSIDCALTFSHPTWYW). A helical transmembrane segment spans residues 232–256 (ENLLKICVFIFAFIMPVLIITVCYG). At 257-280 (LMILRLKSVRMLSGSKEKDRNLRR) the chain is on the cytoplasmic side. A helical membrane pass occupies residues 281-307 (ITRMVLVVVAVFIVCWTPIHIYVIIKA). The Extracellular portion of the chain corresponds to 308 to 315 (LITIPETT). The helical transmembrane segment at 316–339 (FQTVSWHFCIALGYTNSCLNPVLY) threads the bilayer. The NPxxY; plays a role in stabilizing the activated conformation of the receptor signature appears at 335 to 339 (NPVLY). Residues 340 to 401 (AFLDENFKRC…NLEAETAPLP (62 aa)) lie on the Cytoplasmic side of the membrane. C354 carries S-palmitoyl cysteine lipidation. A disordered region spans residues 365 to 385 (NSARIRQNTRDHPSTANTVDR). Phosphoserine is present on S366. T373 is subject to Phosphothreonine. Residue S378 is modified to Phosphoserine. T397 is subject to Phosphothreonine.

It belongs to the G-protein coupled receptor 1 family. In terms of assembly, forms homooligomers and heterooligomers with other GPCRs, such as OPRD1, OPRK1, OPRL1, NPFFR2, ADRA2A, SSTR2, CNR1 and CCR5 (probably in dimeric forms). Interacts with heterotrimeric G proteins; interaction with a heterotrimeric complex containing GNAI1, GNB1 and GNG2 stabilizes the active conformation of the receptor and increases its affinity for endomorphin-2, the synthetic opioid peptide DAMGO and for morphinan agonists. Interacts with PPL; the interaction disrupts agonist-mediated G-protein activation. Interacts (via C-terminus) with DNAJB4 (via C-terminus). Interacts with calmodulin; the interaction inhibits the constitutive activity of OPRM1; it abolishes basal and attenuates agonist-stimulated G-protein coupling. Interacts with FLNA, PLD2, RANBP9 and WLS and GPM6A. Interacts with RTP4. Interacts with SYP and GNAS. Interacts with RGS9, RGS17, RGS20, RGS4, PPP1R9B and HINT1. In terms of processing, phosphorylated. Differentially phosphorylated in basal and agonist-induced conditions. Agonist-mediated phosphorylation modulates receptor internalization. Phosphorylated by GRK2 in a agonist-dependent manner. Phosphorylation at Tyr-169 requires receptor activation, is dependent on non-receptor protein tyrosine kinase Src and results in a decrease in agonist efficacy by reducing G-protein coupling efficiency. Phosphorylated on tyrosine residues; the phosphorylation is involved in agonist-induced G-protein-independent receptor down-regulation. Phosphorylation at Ser-378 is involved in G-protein-dependent but not beta-arrestin-dependent activation of the ERK pathway. Post-translationally, ubiquitinated. A basal ubiquitination seems not to be related to degradation. Ubiquitination is increased upon formation of OPRM1:OPRD1 oligomers leading to proteasomal degradation; the ubiquitination is diminished by RTP4.

Its subcellular location is the cell membrane. It is found in the cell projection. The protein localises to the axon. It localises to the perikaryon. The protein resides in the dendrite. Its subcellular location is the endosome. Receptor for endogenous opioids such as beta-endorphin and endomorphin. Receptor for natural and synthetic opioids including morphine, heroin, DAMGO, fentanyl, etorphine, buprenorphin and methadone. Also activated by enkephalin peptides, such as Met-enkephalin or Met-enkephalin-Arg-Phe, with higher affinity for Met-enkephalin-Arg-Phe. Agonist binding to the receptor induces coupling to an inactive GDP-bound heterotrimeric G-protein complex and subsequent exchange of GDP for GTP in the G-protein alpha subunit leading to dissociation of the G-protein complex with the free GTP-bound G-protein alpha and the G-protein beta-gamma dimer activating downstream cellular effectors. The agonist- and cell type-specific activity is predominantly coupled to pertussis toxin-sensitive G(i) and G(o) G alpha proteins, GNAI1, GNAI2, GNAI3 and GNAO1, and to a lesser extent to pertussis toxin-insensitive G alpha proteins GNAZ and GNA15. They mediate an array of downstream cellular responses, including inhibition of adenylate cyclase activity and both N-type and L-type calcium channels, activation of inward rectifying potassium channels, mitogen-activated protein kinase (MAPK), phospholipase C (PLC), phosphoinositide/protein kinase (PKC), phosphoinositide 3-kinase (PI3K) and regulation of NF-kappa-B. Also couples to adenylate cyclase stimulatory G alpha proteins. The selective temporal coupling to G-proteins and subsequent signaling can be regulated by RGSZ proteins, such as RGS9, RGS17 and RGS4. Phosphorylation by members of the GPRK subfamily of Ser/Thr protein kinases and association with beta-arrestins is involved in short-term receptor desensitization. Beta-arrestins associate with the GPRK-phosphorylated receptor and uncouple it from the G-protein thus terminating signal transduction. The phosphorylated receptor is internalized through endocytosis via clathrin-coated pits which involves beta-arrestins. The activation of the ERK pathway occurs either in a G-protein-dependent or a beta-arrestin-dependent manner and is regulated by agonist-specific receptor phosphorylation. Acts as a class A G-protein coupled receptor (GPCR) which dissociates from beta-arrestin at or near the plasma membrane and undergoes rapid recycling. Receptor down-regulation pathways are varying with the agonist and occur dependent or independent of G-protein coupling. Endogenous ligands induce rapid desensitization, endocytosis and recycling. Heterooligomerization with other GPCRs can modulate agonist binding, signaling and trafficking properties. Involved in neurogenesis. In Sus scrofa (Pig), this protein is Mu-type opioid receptor (OPRM1).